The sequence spans 674 residues: Tripartite terminase subunit 3 (674 aa).

Positions 212-219 (VPRRHGKT) match the Walker A motif motif. Residues 305–310 (LLLVDE) carry the Walker B motif motif. E310 (for ATPase activity) is an active-site residue. Active-site for nuclease activity residues include D463 and E534. A required for interaction with UL56 and DNA packaging region spans residues 580–600 (GRDKALAVEQFISRFNSGYIK). The active-site For nuclease activity is the D651.

It belongs to the herpesviridae TRM3 protein family. Interacts with the terminase subunits TRM1 and TRM2. Interacts with portal protein.

It localises to the host nucleus. Component of the molecular motor that translocates viral genomic DNA in empty capsid during DNA packaging. Forms a tripartite terminase complex together with TRM1 and TRM2 in the host cytoplasm. Once the complex reaches the host nucleus, it interacts with the capsid portal vertex. This portal forms a ring in which genomic DNA is translocated into the capsid. TRM3 carries an RNase H-like nuclease activity that plays an important role for the cleavage of concatemeric viral DNA into unit length genomes. This chain is Tripartite terminase subunit 3, found in Homo sapiens (Human).